A 1064-amino-acid polypeptide reads, in one-letter code: Ribosome quality control complex subunit NEMF (1064 aa).

Thr7 bears the Phosphothreonine mark. Positions 296 to 359 form a coiled coil; that stretch reads VDEFYSKIEG…LIEMNLQIVD (64 aa). Residue Ser417 is modified to Phosphoserine. Residues 420–451 are disordered; it reads EDGDGDASIENSDAEAPKGKKKKQKNKQLQKP. Residues 438–447 are compositionally biased toward basic residues; sequence GKKKKQKNKQ. Residues 481–512 adopt a coiled-coil conformation; it reads AAKKTQRTVEAAEKAFKSAEKKTKQTLKEVQT. Acidic residues predominate over residues 694–707; sequence EQLEGGDSSEEETE. Disordered regions lie at residues 694–718 and 731–973; these read EQLE…DVEL and SGRD…SLTG. A compositionally biased stretch (basic and acidic residues) spans 731–756; that stretch reads SGRDELSSEDGEAKAVTKDQEPIGEM. Ser737 bears the Phosphoserine mark. Over residues 771-781 the composition is skewed to polar residues; it reads IDLSHLQSQRP. Basic and acidic residues predominate over residues 828–839; sequence IEEKDKERESAV. Residues 858-882 are a coiled coil; the sequence is KRGQKSKMKKMKEKYKDQDDEDREL. Positions 859–870 are enriched in basic residues; the sequence is RGQKSKMKKMKE. Basic and acidic residues predominate over residues 947–959; sequence DDPHDDKEEHDLD. A compositionally biased stretch (polar residues) spans 960 to 973; that stretch reads QQGNEENLFDSLTG.

Belongs to the NEMF family. As to quaternary structure, component of the ribosome quality control complex (RQC), composed of the E3 ubiquitin ligase LTN1, TCF25 and NEMF associated with the 60S ribosomal subunit. The complex probably also contains VCP/p97 and its ubiquitin-binding cofactors. Interacts (via its N-terminus) with XPO1.

Its subcellular location is the cytoplasm. The protein resides in the cytosol. It localises to the nucleus. Key component of the ribosome quality control complex (RQC), a ribosome-associated complex that mediates the extraction of incompletely synthesized nascent chains from stalled ribosomes as well as their ubiquitin-mediated proteasomal degradation. Thereby, frees 60S subunit ribosomes from the stalled translation complex and prevents the accumulation of nascent polypeptide chains that are potentially toxic for the cell. Within the RQC complex, NEMF specifically binds stalled 60S ribosomal subunits by recognizing an exposed, nascent chain-conjugated tRNA moiety and promotes the recruitment of LTN1 to stalled 60S subunits. Following binding to stalled 60S ribosomal subunits, NEMF mediates CAT tailing by recruiting alanine-charged tRNA to the A-site and directing the elongation of stalled nascent chains independently of mRNA or 40S subunits, leading to non-templated C-terminal alanine extensions (CAT tails). Mainly recruits alanine-charged tRNAs, but can also other amino acid-charged tRNAs. CAT tailing is required to promote ubiquitination of stalled nascent chains by different E3 ubiquitin-protein ligases. In the canonical RQC pathway (RQC-L), CAT tailing facilitates LTN1-dependent ubiquitination by exposing lysine residues that would otherwise remain buried in the ribosomal exit tunnel. In the alternative RQC pathway (RQC-C) CAT tailing creates an C-degron mainly composed of alanine that is recognized by the CRL2(KLHDC10) and RCHY1/PIRH2 E3 ligases, leading to ubiquitination and degradation of stalled nascent chains. NEMF may also indirectly play a role in nuclear export. This chain is Ribosome quality control complex subunit NEMF, found in Mus musculus (Mouse).